The sequence spans 466 residues: Ribulose bisphosphate carboxylase large chain (466 aa).

Lys-5 carries the N6,N6,N6-trimethyllysine modification. Residues Asn-114 and Thr-164 each contribute to the substrate site. Residue Lys-166 is the Proton acceptor of the active site. Position 168 (Lys-168) interacts with substrate. Mg(2+)-binding residues include Lys-192, Asp-194, and Glu-195. Lys-192 carries the post-translational modification N6-carboxylysine. Catalysis depends on His-285, which acts as the Proton acceptor. 3 residues coordinate substrate: Arg-286, His-318, and Ser-370.

Belongs to the RuBisCO large chain family. Type I subfamily. In terms of assembly, heterohexadecamer of 8 large chains and 8 small chains; disulfide-linked. The disulfide link is formed within the large subunit homodimers. Requires Mg(2+) as cofactor. The disulfide bond which can form in the large chain dimeric partners within the hexadecamer appears to be associated with oxidative stress and protein turnover.

The protein localises to the plastid. It localises to the chloroplast. The enzyme catalyses 2 (2R)-3-phosphoglycerate + 2 H(+) = D-ribulose 1,5-bisphosphate + CO2 + H2O. It carries out the reaction D-ribulose 1,5-bisphosphate + O2 = 2-phosphoglycolate + (2R)-3-phosphoglycerate + 2 H(+). Functionally, ruBisCO catalyzes two reactions: the carboxylation of D-ribulose 1,5-bisphosphate, the primary event in carbon dioxide fixation, as well as the oxidative fragmentation of the pentose substrate in the photorespiration process. Both reactions occur simultaneously and in competition at the same active site. The protein is Ribulose bisphosphate carboxylase large chain of Moringa oleifera (Horseradish tree).